We begin with the raw amino-acid sequence, 255 residues long: Small ribosomal subunit protein uS2 (255 aa).

The protein belongs to the universal ribosomal protein uS2 family.

In Geotalea daltonii (strain DSM 22248 / JCM 15807 / FRC-32) (Geobacter daltonii), this protein is Small ribosomal subunit protein uS2.